The chain runs to 142 residues: Transcriptional regulator MraZ (142 aa).

2 SpoVT-AbrB domains span residues 5–51 (ASSL…PRPE) and 77–120 (AMDV…DKAT).

The protein belongs to the MraZ family. Forms oligomers.

The protein resides in the cytoplasm. It localises to the nucleoid. The sequence is that of Transcriptional regulator MraZ from Variovorax paradoxus (strain S110).